Consider the following 523-residue polypeptide: Lysine--tRNA ligase (523 aa).

The 'HIGH' region motif lies at 30–38; sequence PSGYVHVGN. Residues aspartate 95, cysteine 99, histidine 100, histidine 106, cysteine 177, histidine 180, cysteine 199, and histidine 203 each contribute to the Zn(2+) site. The 'KMSKS' region motif lies at 279 to 283; that stretch reads KMSGS.

Belongs to the class-I aminoacyl-tRNA synthetase family. The cofactor is Zn(2+).

Its subcellular location is the cytoplasm. The enzyme catalyses tRNA(Lys) + L-lysine + ATP = L-lysyl-tRNA(Lys) + AMP + diphosphate. This Pyrococcus furiosus (strain ATCC 43587 / DSM 3638 / JCM 8422 / Vc1) protein is Lysine--tRNA ligase (lysS).